The following is a 55-amino-acid chain: Regulatory protein MokB (55 aa).

In terms of biological role, overlapping regulatory peptide whose translation enables hokB expression. The sequence is that of Regulatory protein MokB (mokB) from Escherichia coli (strain K12).